Here is a 351-residue protein sequence, read N- to C-terminus: sn-glycerol-3-phosphate import ATP-binding protein UgpC (351 aa).

In terms of domain architecture, ABC transporter spans 4–235 (IVLDNVRKSY…PASTFVATFI (232 aa)). 37 to 44 (GPSGCGKS) lines the ATP pocket.

This sequence belongs to the ABC transporter superfamily. sn-glycerol-3-phosphate importer (TC 3.A.1.1.3) family. The complex is composed of two ATP-binding proteins (UgpC), two transmembrane proteins (UgpA and UgpE) and a solute-binding protein (UgpB).

It is found in the cell inner membrane. It carries out the reaction sn-glycerol 3-phosphate(out) + ATP + H2O = sn-glycerol 3-phosphate(in) + ADP + phosphate + H(+). Its function is as follows. Part of the ABC transporter complex UgpBAEC involved in sn-glycerol-3-phosphate (G3P) import. Responsible for energy coupling to the transport system. This Brucella abortus (strain 2308) protein is sn-glycerol-3-phosphate import ATP-binding protein UgpC.